The primary structure comprises 171 residues: 3-hydroxydecanoyl-[acyl-carrier-protein] dehydratase (171 aa).

Residue H71 is part of the active site.

It belongs to the thioester dehydratase family. FabA subfamily. In terms of assembly, homodimer.

It localises to the cytoplasm. The catalysed reaction is a (3R)-hydroxyacyl-[ACP] = a (2E)-enoyl-[ACP] + H2O. It carries out the reaction (3R)-hydroxydecanoyl-[ACP] = (2E)-decenoyl-[ACP] + H2O. It catalyses the reaction (2E)-decenoyl-[ACP] = (3Z)-decenoyl-[ACP]. Its pathway is lipid metabolism; fatty acid biosynthesis. Functionally, necessary for the introduction of cis unsaturation into fatty acids. Catalyzes the dehydration of (3R)-3-hydroxydecanoyl-ACP to E-(2)-decenoyl-ACP and then its isomerization to Z-(3)-decenoyl-ACP. Can catalyze the dehydratase reaction for beta-hydroxyacyl-ACPs with saturated chain lengths up to 16:0, being most active on intermediate chain length. This is 3-hydroxydecanoyl-[acyl-carrier-protein] dehydratase from Sinorhizobium medicae (strain WSM419) (Ensifer medicae).